The sequence spans 490 residues: Cytochrome P450 2C1 (490 aa).

C435 lines the heme pocket.

The protein belongs to the cytochrome P450 family. Requires heme as cofactor.

The protein localises to the endoplasmic reticulum membrane. The protein resides in the microsome membrane. The enzyme catalyses an organic molecule + reduced [NADPH--hemoprotein reductase] + O2 = an alcohol + oxidized [NADPH--hemoprotein reductase] + H2O + H(+). Its function is as follows. Cytochromes P450 are a group of heme-thiolate monooxygenases. In liver microsomes, this enzyme is involved in an NADPH-dependent electron transport pathway. It oxidizes a variety of structurally unrelated compounds, including steroids, fatty acids, and xenobiotics. The chain is Cytochrome P450 2C1 (CYP2C1) from Oryctolagus cuniculus (Rabbit).